Consider the following 457-residue polypeptide: Peptidyl-prolyl cis-trans isomerase FKBP5 (457 aa).

The residue at position 1 (methionine 1) is an N-acetylmethionine. Residues 1–11 are compositionally biased toward basic and acidic residues; it reads MTTDEGAKSSR. Positions 1–28 are disordered; it reads MTTDEGAKSSRENPAATVAEQGEDVTSK. Lysine 28 bears the N6-acetyllysine mark. 2 PPIase FKBP-type domains span residues 50 to 138 and 165 to 251; these read GDKV…LNFK and GARV…KSFE. 3 TPR repeats span residues 268-301, 317-350, and 351-384; these read AAIV…LEME, LAAF…DSAN, and EKGL…NPQN. The disordered stretch occupies residues 424–457; the sequence is EANKAVSKKTSEGVTNEKLTVSHAVEEEKPEGHV. Serine 445 is modified (phosphoserine). Residues 447–457 are compositionally biased toward basic and acidic residues; the sequence is AVEEEKPEGHV.

Part of a heteromultimeric cytoplasmic complex with HSP90AA1, HSPA1A/HSPA1B and steroid receptors. Upon ligand binding dissociates from the complex and FKBP4 takes its place. Interacts with functionally mature heterooligomeric progesterone receptor complexes along with HSP90 and TEBP. Interacts with NR3C1. Interacts with Akt/AKT1 and PHLPP1; enhancing dephosphorylation and subsequent activation of Akt/AKT1. Interacts with IFI44L; this interaction modulates the kinase activity of IKBKB and IKBKE. Interacts with IKBKB and IKBKE. Post-translationally, acetylation impairs ability to promote interaction between Akt/AKT1 and PHLPP1. Deacetylation by SIRT7 promotes interaction between Akt/AKT1 and PHLPP1, leading to suppress Akt/AKT1 activation. Ubiquitinated, leading to degradation in a proteasome-dependent manner. Deubiquitinated by USP49, leading to stabilization.

The protein localises to the cytoplasm. It is found in the nucleus. It carries out the reaction [protein]-peptidylproline (omega=180) = [protein]-peptidylproline (omega=0). With respect to regulation, inhibited by both FK506 and rapamycin. Functionally, immunophilin protein with PPIase and co-chaperone activities. Component of unligated steroid receptors heterocomplexes through interaction with heat-shock protein 90 (HSP90). Plays a role in the intracellular trafficking of heterooligomeric forms of steroid hormone receptors maintaining the complex into the cytoplasm when unliganded. Acts as a regulator of Akt/AKT1 activity by promoting the interaction between Akt/AKT1 and PHLPP1, thereby enhancing dephosphorylation and subsequent activation of Akt/AKT1. Interacts with IKBKE and IKBKB which facilitates IKK complex assembly leading to increased IKBKE and IKBKB kinase activity, NF-kappaB activation, and IFN production. This Saguinus oedipus (Cotton-top tamarin) protein is Peptidyl-prolyl cis-trans isomerase FKBP5 (FKBP5).